The following is an 86-amino-acid chain: Small ribosomal subunit protein bS20 (86 aa).

This sequence belongs to the bacterial ribosomal protein bS20 family.

Binds directly to 16S ribosomal RNA. In Exiguobacterium sibiricum (strain DSM 17290 / CCUG 55495 / CIP 109462 / JCM 13490 / 255-15), this protein is Small ribosomal subunit protein bS20.